The chain runs to 548 residues: Chaperonin GroEL (548 aa).

Residues 30–33 (TLGP), Lys51, 87–91 (DGTTT), Gly415, 479–481 (NAA), and Asp495 contribute to the ATP site.

This sequence belongs to the chaperonin (HSP60) family. In terms of assembly, forms a cylinder of 14 subunits composed of two heptameric rings stacked back-to-back. Interacts with the co-chaperonin GroES. UMPylated on a tyrosine residue by YdiU under ATP-limited conditions.

The protein resides in the cytoplasm. The catalysed reaction is ATP + H2O + a folded polypeptide = ADP + phosphate + an unfolded polypeptide.. Its activity is regulated as follows. UMPylation of the chaperone by YdiU negatively regulates its activity, facilitating Salmonella survival under ATP-limited conditions. Its function is as follows. Together with its co-chaperonin GroES, plays an essential role in assisting protein folding. The GroEL-GroES system forms a nano-cage that allows encapsulation of the non-native substrate proteins and provides a physical environment optimized to promote and accelerate protein folding. This is Chaperonin GroEL from Salmonella typhimurium (strain LT2 / SGSC1412 / ATCC 700720).